The sequence spans 156 residues: NAD(P)H-quinone oxidoreductase subunit N (156 aa).

This sequence belongs to the complex I NdhN subunit family. As to quaternary structure, NDH-1 can be composed of about 15 different subunits; different subcomplexes with different compositions have been identified which probably have different functions.

The protein localises to the cellular thylakoid membrane. The catalysed reaction is a plastoquinone + NADH + (n+1) H(+)(in) = a plastoquinol + NAD(+) + n H(+)(out). It carries out the reaction a plastoquinone + NADPH + (n+1) H(+)(in) = a plastoquinol + NADP(+) + n H(+)(out). Functionally, NDH-1 shuttles electrons from an unknown electron donor, via FMN and iron-sulfur (Fe-S) centers, to quinones in the respiratory and/or the photosynthetic chain. The immediate electron acceptor for the enzyme in this species is believed to be plastoquinone. Couples the redox reaction to proton translocation, and thus conserves the redox energy in a proton gradient. Cyanobacterial NDH-1 also plays a role in inorganic carbon-concentration. This is NAD(P)H-quinone oxidoreductase subunit N from Prochlorococcus marinus subsp. pastoris (strain CCMP1986 / NIES-2087 / MED4).